Reading from the N-terminus, the 265-residue chain is tRNA pseudouridine synthase A (265 aa).

The Nucleophile role is filled by Asp-58. Tyr-116 lines the substrate pocket.

This sequence belongs to the tRNA pseudouridine synthase TruA family. As to quaternary structure, homodimer.

It catalyses the reaction uridine(38/39/40) in tRNA = pseudouridine(38/39/40) in tRNA. Functionally, formation of pseudouridine at positions 38, 39 and 40 in the anticodon stem and loop of transfer RNAs. This is tRNA pseudouridine synthase A from Neisseria meningitidis serogroup B (strain ATCC BAA-335 / MC58).